Consider the following 438-residue polypeptide: Polycomb protein eed-A (438 aa).

The segment at 1 to 67 is disordered; it reads MSEASGRAAG…NAPGRKAWGK (67 aa). Positions 40–57 are enriched in polar residues; the sequence is SIESGTNTERPDTPTNAA. WD repeat units follow at residues 88 to 131, 139 to 182, 185 to 225, 231 to 270, 301 to 338, 356 to 396, and 405 to 438; these read DHNQ…DIRL, DADE…CIKH, GHGN…LVAI, GHRDEVLSADYDLLGEKIMSCGMDHSLKLWRINSLRMKTA, IHRNYVDCVRWLGDLILSKSCENAIVCWKPGKMEDDID, SQCD…PHKA, and KCASAVRQTSFSRDSSILVAVCDDATIWRWDRLR.

It belongs to the WD repeat ESC family. Component of the prc2/eed-ezh2 complex. Interacts with yy1. Can interact with ezh2, hdac1 and taf9.

It is found in the nucleus. In terms of biological role, polycomb group (PcG) protein. Component of the prc2/eed-ezh2 complex, which methylates 'Lys-9' and 'Lys-27' of histone H3, leading to transcriptional repression of the affected target gene. The sequence is that of Polycomb protein eed-A (eed-a) from Xenopus laevis (African clawed frog).